The primary structure comprises 2357 residues: MEDDDTLNGEYFQPVEDMITLPILTEESLLLNLKMRYKKKEIYTYTGSILVAVNPYEILPIYTADIVKSYFAKSRNLMLPHIFAVSDAAFTNMIEEGKNQSIIISGESGAGKTESTKLIIQYLAARTNRHSQVEQMIVESSPILEAFGNAKTIRNNNSSRFGKFIEIQFNREGHISGARIINYLLEKSRISHQASSERNYHIFYQLLAGASDELKEKLKLGEPEDYHYLSQSGCIRIENINDVEDFEHVKYAMNVLGLPEDKQFTIFSIVSAVLHIGNLKFEKSEKTQGAEGSEVSNKDTLKIIAQLLSVDPVKLETCLTIRHVLIRGQNFVIPLKVNEAEDTRDSLAKALYGNVFNWLVVFINSKIHKPQKNSTFIGVLDIFGFENFKKNSFEQFCINFANEKLQQHFNQHIFKLEQEEYEKEKINWSKIVYNDNQECLDLIEKRPLGILSLLDEESRFPQATDLTYLDKLHTNHEKHPYYEKPRRSKNTFVVKHYAGEVHYDTQGFLDKNKDTVSDDLSSLLQGSKSKFIIELFTPPREEGDDSDKGREKKKTTAGQTFKTQLQSLINILSSTQPHYVRCIKPNTTKEPAVYDRELIQAQLRYAGMMETIRIRKLGYPIRHTHKEFRDRYLILDYRARSTDHKQTCAGLINLLSGTGGLERDEWQLGNTKVFIRDHQYLKLEELRKLKLLKKVTLIQSVWRMYRCKKRYQQIRASAKILGAAMLSHSSRRDFQEQRQAVQRIKGFFKMLTYQKQFKIIQINLRIVQNNIRSFIARRHSRNAVLLKRDRNARMLEIQREKDEEERNRQEKEERDRQEKEDKEKETADRRQLQEEQKRREEELRAKREEEELKKLEEKKSQLKELNQIDELSSLERMLKEQQDKNINELDDFVNSLEAFSFEGGVDDSQPYSFNHKMYEMSPEALDKISITDLLQGLKQTVRSVTKFEVDESKFELPPGIENVLKRAPGIKRQASSFLPGQPIPDVYSSPQYPVDEADDDDSNNNYINSNNGDLPLPTSQSSDFSLPPPPSSSSMDFGLPPPPPSSSSGGTYSLPPMPVFDFGMIDPILGAPPPPPSTSDSTSPSATATGNNTPNSSSASASQSTNQVNPQPTVSVVELPQILNDEEISLYSFYDYANKNFNIEKLKQKDDIFSYQKSHIKSSLLVHSDAEQTKVAVEIFSKVLHYMNSNPLVSKKDPADFYSPVKFILTKGLAIESLRDEIYCQLIKQSTSNPIQDLNIRVWELIHFTCSTFPPTRKLIKYFAAYLKTTIQQSDVSKSVKDSAQASYFILQRFTLNGARKQVPSVTELESIKENRPIFVRITATDGSLKGLHIDSATTCQESSNDLSQRSRMRVNSKENGFTIIESFNGIERDIAPTDKLCDVLSKVENLQATLSSKIQVNFKFVFKKKLFFDNITNNVPTTSINVENEFYYHQLFNDLFNSNYCKDQDYQISIGSLKLQFESSDYTDEIRAWLPGNGRGKYFTTDIEKNRFDDFINKYKSHKGLSPEDAKKQMVQLLEKHPLANCSLVVCEHQSESLPYPKNFVLALNVNGINIYDPATSKMLESVKYSNQSQQNLKSDDKSVSIILENKSTLQAFTGDVQKLVSLIKEYSLYLRNNAKYARALKDYNVSDTSLLPFKRNDIITITFKDQENKWFMGQLNGKEGSFPVDHVEILLSDVPPPQPVHPVATLSPPMSPTIPNITNTPPPPPSISDSMSPPPQVGMLPPPPPPSVMGSTKPIEIPSLGIPPPPPSSSNSSVPNSPIGSPMMGIPPPPPTISVHSLSNSGNSTPPPPLPSLSTPPTLSTPPPISSPPNFRSSLRVSMLNTSNDGGDNSSDDPSKRLTVSPAIGTDSQLAQWASTRFRSFKRASTLNQQQATLKRKAPVDPNTAFYFNKDPIKESLIEMEAKLSKKAIKNFSEIMMWMGDYPIPKGQTASLVIQSIISRGIENHELRDEIYCQAYRQTNKNPKVESAKKGFELIYFLSITFSPSDSLLQPFMEQLMSRNIAIQSSSPQLASLIAVCIEKLESHPIPSYQQRKMGPSATEIQSFRSNLENGDISTCKIRFIDQSTKLAKINTYTTIREITDTVCRQYGISQQSIKMFGISAVNETAGISKVVSETDMIYDVLARWEQSEEKGEFYFQVRRRFFLDDVNKILDQEHLWTDDDICFELTYCQIRDEWMKGLYTNVNEKDSSIIAAILIQLLYPNQSKLVLTKEVVRQVLPDQILNSQNIKVWISMIESQIFELVSQTPEYLKLMFINLIGSKSPLFGCTLFNIQQKENPPKAWLAINKKGVSIFDPHTKESKNFWTFQSISNVAFTDDTFCIMTGNLMKPIKQTFTTDEHSSIASVYQFYSSQ.

One can recognise a Myosin motor domain in the interval 13–688 (QPVEDMITLP…QYLKLEELRK (676 aa)). 106-113 (GESGAGKT) lines the ATP pocket. The actin-binding stretch occupies residues 579 to 586 (YVRCIKPN). The region spanning 691–720 (LLKKVTLIQSVWRMYRCKKRYQQIRASAKI) is the IQ domain. Positions 787 to 891 (KRDRNARMLE…QDKNINELDD (105 aa)) form a coiled coil. The interval 787-1076 (KRDRNARMLE…PILGAPPPPP (290 aa)) is binding to talin A. 2 disordered regions span residues 797-852 (IQRE…EEEL) and 974-1112 (ASSF…NPQP). Low complexity-rich tracts occupy residues 1003 to 1025 (NNNY…SDFS) and 1078 to 1106 (TSDS…QSTN). Positions 1155–1313 (YQKSHIKSSL…PSVTELESIK (159 aa)) constitute a MyTH4 1 domain. An FERM 1 domain is found at 1318–1620 (IFVRITATDG…EYSLYLRNNA (303 aa)). In terms of domain architecture, SH3 spans 1618–1678 (NNAKYARALK…PVDHVEILLS (61 aa)). Residues 1686 to 1849 (VHPVATLSPP…PSKRLTVSPA (164 aa)) form a disordered region. Pro residues predominate over residues 1706–1733 (TPPPPPSISDSMSPPPQVGMLPPPPPPS). Composition is skewed to low complexity over residues 1734–1746 (VMGS…IPSL) and 1755–1770 (SSNS…SPMM). The segment covering 1817-1828 (FRSSLRVSMLNT) has biased composition (polar residues). In terms of domain architecture, MyTH4 2 spans 1894–2051 (FNKDPIKESL…PSATEIQSFR (158 aa)). One can recognise an FERM 2 domain in the interval 2060–2357 (STCKIRFIDQ…ASVYQFYSSQ (298 aa)).

This sequence belongs to the TRAFAC class myosin-kinesin ATPase superfamily. Myosin family. In terms of assembly, monomer. Interacts with talA.

Its subcellular location is the cytoplasm. In terms of biological role, myosins are actin-based motor molecules with ATPase activity. Involved in the early steps of phagocytosis and adhesion. This Dictyostelium discoideum (Social amoeba) protein is Myosin-I heavy chain (myoI).